The sequence spans 299 residues: Taste receptor type 2 member 5 (299 aa).

Met-1 is a topological domain (extracellular). The helical transmembrane segment at 2–22 (LSAGLGLLMLVAVIEFLIGLI) threads the bilayer. At 23 to 45 (GNGILVVWSLREWIRKFSWSSYN) the chain is on the cytoplasmic side. A helical transmembrane segment spans residues 46–66 (LIILGLAGCRFLLQWLIILDL). The Extracellular segment spans residues 67–82 (SLFPLFQSSSWLRYLN). A helical transmembrane segment spans residues 83–103 (VFWVLVSQASLWFATFLSVFY). Residues 104–127 (CKKITTFDRPAYLWLKQRAYNLSL) are Cytoplasmic-facing. The chain crosses the membrane as a helical span at residues 128-148 (WCLLGYFIISLLLTVQVGLTV). Residues 149-175 (HHPPQGNSSIRYPFEHWQYLYVFQLNS) lie on the Extracellular side of the membrane. Asn-155 carries an N-linked (GlcNAc...) asparagine glycan. Residues 176–196 (GSYLPLMVFLVSSGMLIISLY) traverse the membrane as a helical segment. The Cytoplasmic portion of the chain corresponds to 197-223 (THHKKMKVHSAGRRDARAKAHITALKS). The chain crosses the membrane as a helical span at residues 224 to 244 (LGCFLLLHLVYIVASPFSITS). The Extracellular portion of the chain corresponds to 245–253 (KTYPPDLTS). Residues 254-274 (VFIWETLMAAYPSLHSLMLIM) traverse the membrane as a helical segment. At 275-299 (GIPRVKQTCQKILWKTVCARRCWGP) the chain is on the cytoplasmic side.

It belongs to the G-protein coupled receptor T2R family.

It localises to the membrane. Receptor that may play a role in the perception of bitterness and is gustducin-linked. May play a role in sensing the chemical composition of the gastrointestinal content. The activity of this receptor may stimulate alpha gustducin, mediate PLC-beta-2 activation and lead to the gating of TRPM5. The chain is Taste receptor type 2 member 5 (TAS2R5) from Papio hamadryas (Hamadryas baboon).